A 180-amino-acid chain; its full sequence is Shikimate kinase (180 aa).

14–19 is an ATP binding site; that stretch reads GAGKSS. Ser18 serves as a coordination point for Mg(2+). Residues Asp36, Arg60, and Gly82 each coordinate substrate. Position 120 (Arg120) interacts with ATP. Arg139 is a substrate binding site.

This sequence belongs to the shikimate kinase family. In terms of assembly, monomer. It depends on Mg(2+) as a cofactor.

Its subcellular location is the cytoplasm. The catalysed reaction is shikimate + ATP = 3-phosphoshikimate + ADP + H(+). Its pathway is metabolic intermediate biosynthesis; chorismate biosynthesis; chorismate from D-erythrose 4-phosphate and phosphoenolpyruvate: step 5/7. Functionally, catalyzes the specific phosphorylation of the 3-hydroxyl group of shikimic acid using ATP as a cosubstrate. This chain is Shikimate kinase, found in Xylella fastidiosa (strain M12).